The primary structure comprises 1228 residues: DNA repair protein rad5 (1228 aa).

Disordered regions lie at residues 1-96, 194-242, 280-302, and 445-474; these read MDRH…GTLT, PPVR…VLPS, QPPT…PRVS, and KAMD…QELE. Residues 34–43 are compositionally biased toward low complexity; the sequence is PSSSPQFSAP. A compositionally biased stretch (acidic residues) spans 70–83; it reads HNDDDDDDDDDDDE. Polar residues predominate over residues 211 to 237; that stretch reads PKKSSTSQARSRSHAQAQPQPQSNTPT. Basic and acidic residues predominate over residues 445–454; the sequence is KAMDKAKAGD. Over residues 465 to 474 the composition is skewed to acidic residues; that stretch reads EEAEEGQELE. Residues 574–784 form the Helicase ATP-binding domain; sequence PKQEQHCLGG…FSLVRFLRVE (211 aa). 587-594 provides a ligand contact to ATP; the sequence is DEMGLGKT. A DEAH box motif is present at residues 735–738; sequence DEAH. The RING-type zinc-finger motif lies at 967 to 1012; that stretch reads CPICAEEPMIDQAVTGCWHSACKKCLLDYIKHQTDRNEVPRCFQCR. One can recognise a Helicase C-terminal domain in the interval 1060 to 1216; the sequence is ALISHLRTLR…MMSDEEKKMQ (157 aa).

It belongs to the SNF2/RAD54 helicase family.

It localises to the cytoplasm. Its subcellular location is the nucleus. Probable helicase, member of the UBC2/RAD6 epistasis group. Functions with DNA repair protein uvs-2/rad18 in error-free postreplication DNA repair. Involved in the maintenance of wild-type rates of instability of simple repetitive sequences such as poly(GT) repeats. Seems to be involved in maintaining a balance which acts in favor of error-prone non-homologous joining during DNA double-strand breaks repairs. The protein is DNA repair protein rad5 (mus-41) of Neurospora crassa (strain ATCC 24698 / 74-OR23-1A / CBS 708.71 / DSM 1257 / FGSC 987).